Consider the following 1213-residue polypeptide: MIDVNKFESMQIGLASPDKIRSWSYGEVKKPETINYRTLKPEKDGLFDERIFGPTKDWECACGKYKRIRYKGIVCDRCGVEVTRSKVRRERMGHIELAAPVTHIWYFKGIPSRMGLVLDMSPRALEEIIYFASYVVIESGNTPLEKKQLLSEREYREKKAQYGNEFEAAMGAEAIKRLLNNVDLEKEARDLKETLKDASGQKRTRAVRRLDIIEAFVTSGNEPAWMVMDAIPVIPPDLRPMVQLEGGRFATSDLNDLYRRVINRNNRLKRLLDLNAPGIIVQNEKRMLQEAVDALIDNGRRGRPVAGPGNRPLKSLSHMLKGKQGRFRQNLLGKRVDYSGRSVIDVGPFLKMNQMGLPRQMALELFKPFIMKELVKRELASNIKNAKRKIEHADDDVWGVLEDVIKEHPVLLNRAPTLHRLGIQAFEPVLVSGKAMRLHPLACEAYNADFDGDQMAIHVPLSDEAQAEARLLMLAAHHILAPKDGKPVVTPSQDMVIGNYYLTTEEIGREGEGMIFKDLNEAQKAYQSGYVHLHSRVGIQVSSMPDKPFTDDQKQAVLVTTVGKAIFNNILPGKFPYLNEPTNDNLIAGTPDKYFLKPGEDIHQFLDAQEIIPPFKKGFLADIIAEVYKQYHVTATSLLLDRMKDLGYNISTKSGLTVGVADITGLKEKPAIIAEAHKQVNTISKQFRRGLITDDERYERVIGVWNDAKDQIQQKLIESFNADNPIFMMSDSGARGNISNFTQLAGMRGLMAAPNGKIMELPILSNFREGLSVLEMFISTHGARKGMTDTALKTANSGYLTRRLVDVAQDVIVREKDCGTDRGLRIHAIMEGNEVIEPLYDRILGRYTMKTVFDPETHDEIVGNNVLIDEDLAHKIVDAGVTEVTIRSAFTCNTKHGVCEHCYGRNMATGDEVEVGEAVGTVAAQSIGEPGTQLTMRNFHTGGVAGDDITQGLPRVQEIVESRNPKGRAEISEVTGTVELIEENPAERTKEVTVKGETDTRTYTLPLTARMAVSEGDFIHRGAALNIGSIDPKQLIQVRDVLSTENYLLREVQKVYRMQGVEIGDKHVEIMIRQMLRKVRVMDPGDTDVLPGTLMDIADFKDENYKTLIAGGIPATSRPVILGITKAALETNSFLSAASFQETTRVLTDAAIRGKNDPLIGLKENVIIGKIIPAGTGMPVYRHIKPKEVGNVADGVYSISDLEKQMQEQDASK.

Residues Cys60, Cys62, Cys75, and Cys78 each coordinate Zn(2+). Mg(2+)-binding residues include Asp449, Asp451, and Asp453. Cys818, Cys892, Cys899, and Cys902 together coordinate Zn(2+).

It belongs to the RNA polymerase beta' chain family. The RNAP catalytic core consists of 2 alpha, 1 beta, 1 beta' and 1 omega subunit. When a sigma factor is associated with the core the holoenzyme is formed, which can initiate transcription. Mg(2+) serves as cofactor. Zn(2+) is required as a cofactor.

It catalyses the reaction RNA(n) + a ribonucleoside 5'-triphosphate = RNA(n+1) + diphosphate. Its function is as follows. DNA-dependent RNA polymerase catalyzes the transcription of DNA into RNA using the four ribonucleoside triphosphates as substrates. The sequence is that of DNA-directed RNA polymerase subunit beta' from Lactiplantibacillus plantarum (strain ATCC BAA-793 / NCIMB 8826 / WCFS1) (Lactobacillus plantarum).